The chain runs to 557 residues: Formate--tetrahydrofolate ligase (557 aa).

Thr-66–Thr-73 provides a ligand contact to ATP.

The protein belongs to the formate--tetrahydrofolate ligase family.

The catalysed reaction is (6S)-5,6,7,8-tetrahydrofolate + formate + ATP = (6R)-10-formyltetrahydrofolate + ADP + phosphate. It participates in one-carbon metabolism; tetrahydrofolate interconversion. The protein is Formate--tetrahydrofolate ligase of Bartonella tribocorum (strain CIP 105476 / IBS 506).